Here is a 1782-residue protein sequence, read N- to C-terminus: Vitellogenin (1782 aa).

The first 15 residues, 1-15 (MKLFVLAAIIAAVSS), serve as a signal peptide directing secretion. The 779-residue stretch at 34-812 (WQVGKQYRYE…SEDSLLPKDF (779 aa)) folds into the Vitellogenin domain. Disordered regions lie at residues 333–367 (HYES…SRRS) and 379–406 (VLKK…INDD). Residues 344-358 (ESHEFNFPEQHEHPH) show a composition bias toward basic and acidic residues. Positions 386–400 (ESSSGSSSSSADSSS) are enriched in low complexity. N-linked (GlcNAc...) asparagine glycosylation is found at asparagine 569, asparagine 587, asparagine 1357, asparagine 1463, and asparagine 1596. One can recognise a VWFD domain in the interval 1449-1638 (PYCSIDGTRI…AYSLNEENSD (190 aa)). A disulfide bond links cysteine 1451 and cysteine 1602.

As to quaternary structure, heterotetramer of two heavy and two light chains. In terms of processing, glycosylated and phosphorylated. In terms of tissue distribution, detected in oocytes (at protein level). Produced by the fat body, where it is cleaved before being secreted into hemolymph. Sequestered then by a single class of receptor mediated endocytosis in the ovary.

It is found in the secreted. The protein resides in the cytoplasm. It localises to the cytoplasmic granule. Its function is as follows. Precursor of the egg-yolk proteins that are sources of nutrients during embryonic development. This chain is Vitellogenin (VG), found in Bombyx mori (Silk moth).